We begin with the raw amino-acid sequence, 37 residues long: Cytochrome b6-f complex subunit 5 (37 aa).

Residues 5-25 traverse the membrane as a helical segment; it reads ILLGIVLGMVVVTLAGLFVAA.

It belongs to the PetG family. The 4 large subunits of the cytochrome b6-f complex are cytochrome b6, subunit IV (17 kDa polypeptide, PetD), cytochrome f and the Rieske protein, while the 4 small subunits are PetG, PetL, PetM and PetN. The complex functions as a dimer.

Its subcellular location is the cellular thylakoid membrane. Functionally, component of the cytochrome b6-f complex, which mediates electron transfer between photosystem II (PSII) and photosystem I (PSI), cyclic electron flow around PSI, and state transitions. PetG is required for either the stability or assembly of the cytochrome b6-f complex. The chain is Cytochrome b6-f complex subunit 5 from Synechococcus sp. (strain JA-2-3B'a(2-13)) (Cyanobacteria bacterium Yellowstone B-Prime).